Here is a 448-residue protein sequence, read N- to C-terminus: Protease Do-like 8, chloroplastic (448 aa).

Positions 152-333 are serine protease; the sequence is EGNGSGVVWD…IPSSTVLKIV (182 aa). Active-site charge relay system residues include H171, D214, and S292. The PDZ domain occupies 336–433; sequence LIQFSKVLRA…DKVTLKIKRG (98 aa).

This sequence belongs to the peptidase S1C family.

It is found in the plastid. The protein localises to the chloroplast thylakoid lumen. Probable serine protease. This chain is Protease Do-like 8, chloroplastic (DEGP8), found in Arabidopsis thaliana (Mouse-ear cress).